The chain runs to 337 residues: uncharacterized protein (337 aa).

Residues asparagine 291 to phenylalanine 314 form a disordered region. Positions threonine 299 to threonine 308 are enriched in low complexity.

This is an uncharacterized protein from Acanthamoeba polyphaga mimivirus (APMV).